The primary structure comprises 242 residues: Polycomb group RING finger protein 3 (242 aa).

An RING-type zinc finger spans residues 17–56 (CRLCSGYLIDATTVTECLHTFCRSCLVKYLEENNTCPTCR). The disordered stretch occupies residues 115-149 (AKQHLDPHRNGETKADDSSNKEAAEEKQEEDGDYH). Over residues 117–140 (QHLDPHRNGETKADDSSNKEAAEE) the composition is skewed to basic and acidic residues. Residues 132 to 242 (SSNKEAAEEK…LHYRPKMDLL (111 aa)) are interaction with BCORL1.

In terms of assembly, component of a PRC1-like complex that contains PCGF3, RNF2 and RYBP. Interacts with CBX6, CBX7 and CBX8. Interacts with BCORL1.

It is found in the nucleus. Its subcellular location is the nucleoplasm. Functionally, component of a Polycomb group (PcG) multiprotein PRC1-like complex, a complex class required to maintain the transcriptionally repressive state of many genes, including Hox genes, throughout development. PcG PRC1 complex acts via chromatin remodeling and modification of histones; it mediates monoubiquitination of histone H2A 'Lys-119', rendering chromatin heritably changed in its expressibility. Within the PRC1-like complex, regulates RNF2 ubiquitin ligase activity. Plays a redundant role with PCGF5 as part of a PRC1-like complex that mediates monoubiquitination of histone H2A 'Lys-119' on the X chromosome and is required for normal silencing of one copy of the X chromosome in XX females. The protein is Polycomb group RING finger protein 3 (PCGF3) of Bos taurus (Bovine).